Here is a 512-residue protein sequence, read N- to C-terminus: Kelch repeat protein C2 (512 aa).

The region spanning 2–67 is the BTB domain; the sequence is ESVIFSINGE…MRWKKINITV (66 aa). The region spanning 102–176 is the BACK domain; that stretch reads CIRMFNFSKR…LLKWIHKNPN (75 aa). Kelch repeat units follow at residues 216–261, 262–307, 309–354, 356–403, 405–449, and 452–498; these read IKHN…LYNC, LYII…VNDG, LYVI…FVND, IYVM…EYDG, IYAI…SCGD, and LIIA…THKS.

The protein belongs to the poxviruses Kelch family.

This chain is Kelch repeat protein C2, found in Camelus.